Consider the following 355-residue polypeptide: Phospho-N-acetylmuramoyl-pentapeptide-transferase (355 aa).

10 consecutive transmembrane segments (helical) span residues glycine 3 to isoleucine 23, valine 56 to phenylalanine 76, glycine 80 to isoleucine 100, alanine 120 to leucine 140, valine 156 to valine 176, leucine 185 to phenylalanine 205, proline 224 to tryptophan 244, isoleucine 251 to valine 271, leucine 276 to valine 296, and phenylalanine 330 to leucine 350.

It belongs to the glycosyltransferase 4 family. MraY subfamily. Requires Mg(2+) as cofactor.

It localises to the cell membrane. It catalyses the reaction UDP-N-acetyl-alpha-D-muramoyl-L-alanyl-gamma-D-glutamyl-meso-2,6-diaminopimeloyl-D-alanyl-D-alanine + di-trans,octa-cis-undecaprenyl phosphate = di-trans,octa-cis-undecaprenyl diphospho-N-acetyl-alpha-D-muramoyl-L-alanyl-D-glutamyl-meso-2,6-diaminopimeloyl-D-alanyl-D-alanine + UMP. It functions in the pathway cell wall biogenesis; peptidoglycan biosynthesis. Functionally, catalyzes the initial step of the lipid cycle reactions in the biosynthesis of the cell wall peptidoglycan: transfers peptidoglycan precursor phospho-MurNAc-pentapeptide from UDP-MurNAc-pentapeptide onto the lipid carrier undecaprenyl phosphate, yielding undecaprenyl-pyrophosphoryl-MurNAc-pentapeptide, known as lipid I. This is Phospho-N-acetylmuramoyl-pentapeptide-transferase from Frankia casuarinae (strain DSM 45818 / CECT 9043 / HFP020203 / CcI3).